The following is a 61-amino-acid chain: Photosystem II reaction center protein Z (61 aa).

Helical transmembrane passes span 5-25 (LTAL…VALA) and 38-58 (NKAF…DGIS).

The protein belongs to the PsbZ family. As to quaternary structure, PSII is composed of 1 copy each of membrane proteins PsbA, PsbB, PsbC, PsbD, PsbE, PsbF, PsbH, PsbI, PsbJ, PsbK, PsbL, PsbM, PsbT, PsbX, PsbY, PsbZ, Psb30/Ycf12, at least 3 peripheral proteins of the oxygen-evolving complex and a large number of cofactors. It forms dimeric complexes.

It is found in the plastid. The protein resides in the chloroplast thylakoid membrane. May control the interaction of photosystem II (PSII) cores with the light-harvesting antenna, regulates electron flow through the 2 photosystem reaction centers. PSII is a light-driven water plastoquinone oxidoreductase, using light energy to abstract electrons from H(2)O, generating a proton gradient subsequently used for ATP formation. The chain is Photosystem II reaction center protein Z from Skeletonema costatum (Marine centric diatom).